The sequence spans 305 residues: Glycine--tRNA ligase alpha subunit (305 aa).

Belongs to the class-II aminoacyl-tRNA synthetase family. Tetramer of two alpha and two beta subunits.

It localises to the cytoplasm. The enzyme catalyses tRNA(Gly) + glycine + ATP = glycyl-tRNA(Gly) + AMP + diphosphate. This is Glycine--tRNA ligase alpha subunit from Streptococcus pyogenes serotype M4 (strain MGAS10750).